A 274-amino-acid polypeptide reads, in one-letter code: tRNA-cytidine(32) 2-sulfurtransferase (274 aa).

The PP-loop motif signature appears at 40 to 45 (SGGKDS). [4Fe-4S] cluster contacts are provided by C115, C118, and C206.

Belongs to the TtcA family. As to quaternary structure, homodimer. Mg(2+) is required as a cofactor. Requires [4Fe-4S] cluster as cofactor.

The protein localises to the cytoplasm. It catalyses the reaction cytidine(32) in tRNA + S-sulfanyl-L-cysteinyl-[cysteine desulfurase] + AH2 + ATP = 2-thiocytidine(32) in tRNA + L-cysteinyl-[cysteine desulfurase] + A + AMP + diphosphate + H(+). The protein operates within tRNA modification. In terms of biological role, catalyzes the ATP-dependent 2-thiolation of cytidine in position 32 of tRNA, to form 2-thiocytidine (s(2)C32). The sulfur atoms are provided by the cysteine/cysteine desulfurase (IscS) system. The polypeptide is tRNA-cytidine(32) 2-sulfurtransferase (Pseudomonas putida (strain ATCC 700007 / DSM 6899 / JCM 31910 / BCRC 17059 / LMG 24140 / F1)).